Consider the following 315-residue polypeptide: Olfactory receptor 5M10 (315 aa).

At methionine 1–lysine 25 the chain is on the extracellular side. N-linked (GlcNAc...) asparagine glycosylation occurs at asparagine 5. The helical transmembrane segment at isoleucine 26–isoleucine 46 threads the bilayer. Topologically, residues leucine 47–glutamine 54 are cytoplasmic. The chain crosses the membrane as a helical span at residues leucine 55–serine 75. At asparagine 76–threonine 99 the chain is on the extracellular side. Cysteine 97 and cysteine 189 are joined by a disulfide. Residues glutamine 100–leucine 120 form a helical membrane-spanning segment. The Cytoplasmic portion of the chain corresponds to aspartate 121–asparagine 139. Residues isoleucine 140–threonine 160 traverse the membrane as a helical segment. Residues leucine 161–lysine 196 are Extracellular-facing. The chain crosses the membrane as a helical span at residues methionine 197 to serine 217. At tyrosine 218–alanine 237 the chain is on the cytoplasmic side. The chain crosses the membrane as a helical span at residues phenylalanine 238–methionine 258. Residues tyrosine 259–serine 271 are Extracellular-facing. Residues lysine 272–leucine 292 form a helical membrane-spanning segment. The Cytoplasmic segment spans residues arginine 293 to valine 315.

It belongs to the G-protein coupled receptor 1 family.

The protein resides in the cell membrane. In terms of biological role, odorant receptor. The polypeptide is Olfactory receptor 5M10 (OR5M10) (Homo sapiens (Human)).